Reading from the N-terminus, the 114-residue chain is MIVVKFCPKCNSMMVPKKSNGKNVYRCTKCGYEKEVPETTIVVTSKVKHSIKEKTLVLEEEEMPSGAQKIKGVLCPSCKNDEAYFWILQTRRADEPPTRFYKCTKCGKVWREYE.

Residues Met-1–Val-43 form an N-ZR region. Positions 7, 10, 27, 30, 75, and 78 each coordinate Zn(2+). The tract at residues Met-63 to Glu-114 is C-ZR. The TFIIS-type zinc finger occupies Lys-71–Arg-111. Catalysis depends on residues Asp-94 and Glu-95. The Zn(2+) site is built by Cys-103 and Cys-106.

It belongs to the archaeal RpoM/eukaryotic RPA12/RPB9/RPC11 RNA polymerase family. In terms of assembly, interacts with RNA polymerase; probably competes with TFS4 for the same binding site. Zn(2+) is required as a cofactor.

Functionally, induces RNA cleavage activity in the RNA polymerase. Induces rapid cleavage of a stalled transcription elongation complex with a 2-nucleotide reduction at the 3' end of the nascent RNA. Truncated RNA is able to resume elongation. During transcription elongation it enhances processivity. Involved in transcriptional proofreading and fidelity. Misincorporation of nucleotides during elongation of transcription leads to arrested elongation complexes which are rescued by TFS-promoted removal of a dinucleotide from the 3'-end. TFS1 is able to induce a cleavage resynthesis cycle in stalled elongation complexes (resulting from the next missing nucleotide or a reduced incorporation rate of a wrong nucleotide) preventing misincorporation and enabling proofreading in a post-incorporation manner. Pausing of elongation complexes is the main determinant of TFS-induced RNA cleavage. The polypeptide is Transcription factor S1 (Saccharolobus solfataricus (strain ATCC 35092 / DSM 1617 / JCM 11322 / P2) (Sulfolobus solfataricus)).